Consider the following 246-residue polypeptide: 1-(5-phosphoribosyl)-5-[(5-phosphoribosylamino)methylideneamino] imidazole-4-carboxamide isomerase (246 aa).

Asp7 (proton acceptor) is an active-site residue. The active-site Proton donor is Asp129.

The protein belongs to the HisA/HisF family.

It is found in the cytoplasm. It carries out the reaction 1-(5-phospho-beta-D-ribosyl)-5-[(5-phospho-beta-D-ribosylamino)methylideneamino]imidazole-4-carboxamide = 5-[(5-phospho-1-deoxy-D-ribulos-1-ylimino)methylamino]-1-(5-phospho-beta-D-ribosyl)imidazole-4-carboxamide. Its pathway is amino-acid biosynthesis; L-histidine biosynthesis; L-histidine from 5-phospho-alpha-D-ribose 1-diphosphate: step 4/9. This Buchnera aphidicola subsp. Acyrthosiphon pisum (strain 5A) protein is 1-(5-phosphoribosyl)-5-[(5-phosphoribosylamino)methylideneamino] imidazole-4-carboxamide isomerase.